A 90-amino-acid polypeptide reads, in one-letter code: Probable Fe(2+)-trafficking protein (90 aa).

This sequence belongs to the Fe(2+)-trafficking protein family.

In terms of biological role, could be a mediator in iron transactions between iron acquisition and iron-requiring processes, such as synthesis and/or repair of Fe-S clusters in biosynthetic enzymes. In Nitrosomonas europaea (strain ATCC 19718 / CIP 103999 / KCTC 2705 / NBRC 14298), this protein is Probable Fe(2+)-trafficking protein.